The chain runs to 84 residues: Large ribosomal subunit protein bL31B (84 aa).

It belongs to the bacterial ribosomal protein bL31 family. Type B subfamily. As to quaternary structure, part of the 50S ribosomal subunit.

This is Large ribosomal subunit protein bL31B from Parabacteroides distasonis (strain ATCC 8503 / DSM 20701 / CIP 104284 / JCM 5825 / NCTC 11152).